We begin with the raw amino-acid sequence, 413 residues long: CinA-like protein (413 aa).

Belongs to the CinA family.

The polypeptide is CinA-like protein (Desulfotalea psychrophila (strain LSv54 / DSM 12343)).